A 1122-amino-acid polypeptide reads, in one-letter code: Cytosolic carboxypeptidase 4 (1122 aa).

The disordered stretch occupies residues 287-338; sequence PGSTSSELPLNLTEEDFDDDGDEEMDKDSDVEAVKEDDDLETDLSKLSSKPG. Residues 299-313 are compositionally biased toward acidic residues; sequence TEEDFDDDGDEEMDK. One can recognise a Peptidase M14 domain in the interval 731–1021; that stretch reads YPYTYSTLMT…MYCLGLLILE (291 aa). Zn(2+) contacts are provided by His803, Glu806, and His900. Glu985 (proton donor/acceptor) is an active-site residue. The segment at 1099–1122 is disordered; it reads CALNKDEEEEEKEEGTGWRRRSVT.

Belongs to the peptidase M14 family. As to quaternary structure, interacts with MYLK. Interacts with TCF4. Zn(2+) serves as cofactor. In terms of tissue distribution, widely expressed at low level. Expressed in eye, muscle, pituitary, testis and to a lower extent in brain.

It localises to the cytoplasm. Its subcellular location is the cytosol. The catalysed reaction is (L-glutamyl)(n+1)-gamma-L-glutamyl-L-glutamyl-[protein] + H2O = (L-glutamyl)(n)-gamma-L-glutamyl-L-glutamyl-[protein] + L-glutamate. It catalyses the reaction C-terminal L-alpha-aminoacyl-L-glutamyl-L-glutamyl-[tubulin] + H2O = C-terminal L-alpha-aminoacyl-L-glutamyl-[tubulin] + L-glutamate. In terms of biological role, metallocarboxypeptidase that mediates deglutamylation of tubulin and non-tubulin target proteins. Catalyzes the removal of polyglutamate side chains present on the gamma-carboxyl group of glutamate residues within the C-terminal tail of tubulin protein. Specifically cleaves tubulin long-side-chains, while it is not able to remove the branching point glutamate. Also catalyzes the removal of polyglutamate residues from the carboxy-terminus of non-tubulin proteins such as MYLK. The sequence is that of Cytosolic carboxypeptidase 4 from Mus musculus (Mouse).